Here is a 400-residue protein sequence, read N- to C-terminus: tRNA-specific adenosine deaminase 1 (400 aa).

Residues 76–400 (SIATGVKALP…WIPTRTDDVK (325 aa)) form the A to I editase domain. H101 is a Zn(2+) binding site. The Proton donor role is filled by E103. R108 lines the 1D-myo-inositol hexakisphosphate pocket. Zn(2+)-binding residues include C157 and C223. Positions 226, 232, 369, and 375 each coordinate 1D-myo-inositol hexakisphosphate.

Belongs to the ADAT1 family. Requires 1D-myo-inositol hexakisphosphate as cofactor. The cofactor is Zn(2+).

It carries out the reaction adenosine(37) in tRNA(Ala) + H2O + H(+) = inosine(37) in tRNA(Ala) + NH4(+). Deaminates adenosine-37 to inosine in tRNA-Ala. In Saccharomyces cerevisiae (strain ATCC 204508 / S288c) (Baker's yeast), this protein is tRNA-specific adenosine deaminase 1 (TAD1).